The chain runs to 98 residues: Small ribosomal subunit protein bS20 (98 aa).

Basic residues predominate over residues Met1–Pro12. The disordered stretch occupies residues Met1–Arg31.

The protein belongs to the bacterial ribosomal protein bS20 family.

Binds directly to 16S ribosomal RNA. In Chlamydia trachomatis serovar L2 (strain ATCC VR-902B / DSM 19102 / 434/Bu), this protein is Small ribosomal subunit protein bS20.